The following is a 188-amino-acid chain: Nicotinamide-nucleotide adenylyltransferase (188 aa).

Belongs to the archaeal NMN adenylyltransferase family.

The protein resides in the cytoplasm. The catalysed reaction is beta-nicotinamide D-ribonucleotide + ATP + H(+) = diphosphate + NAD(+). The protein operates within cofactor biosynthesis; NAD(+) biosynthesis; NAD(+) from nicotinamide D-ribonucleotide: step 1/1. This is Nicotinamide-nucleotide adenylyltransferase from Pyrococcus furiosus (strain ATCC 43587 / DSM 3638 / JCM 8422 / Vc1).